We begin with the raw amino-acid sequence, 430 residues long: Adenylosuccinate synthetase (430 aa).

GTP-binding positions include 12-18 (GDEGKGK) and 40-42 (GHT). Residue Asp13 is the Proton acceptor of the active site. Asp13 and Gly40 together coordinate Mg(2+). Residues 13 to 16 (DEGK), 38 to 41 (NAGH), Thr130, Arg144, Gln224, Thr239, and Arg303 each bind IMP. Residue His41 is the Proton donor of the active site. 299-305 (VVTGRKR) contacts substrate. GTP-binding positions include Arg305, 331–333 (KLD), and 413–415 (STS).

It belongs to the adenylosuccinate synthetase family. As to quaternary structure, homodimer. Requires Mg(2+) as cofactor.

The protein resides in the cytoplasm. It catalyses the reaction IMP + L-aspartate + GTP = N(6)-(1,2-dicarboxyethyl)-AMP + GDP + phosphate + 2 H(+). It participates in purine metabolism; AMP biosynthesis via de novo pathway; AMP from IMP: step 1/2. In terms of biological role, plays an important role in the de novo pathway of purine nucleotide biosynthesis. Catalyzes the first committed step in the biosynthesis of AMP from IMP. This is Adenylosuccinate synthetase from Methylobacterium nodulans (strain LMG 21967 / CNCM I-2342 / ORS 2060).